A 67-amino-acid chain; its full sequence is Small ribosomal subunit protein eS31 (67 aa).

Cys-31, Cys-34, Cys-49, and Cys-52 together coordinate Zn(2+). The C4-type zinc-finger motif lies at 31 to 52 (CPKCGAGVFMAEHLNRFACGKC).

Belongs to the eukaryotic ribosomal protein eS31 family. In terms of assembly, part of the 30S ribosomal subunit. Zn(2+) serves as cofactor.

The sequence is that of Small ribosomal subunit protein eS31 from Methanococcus maripaludis (strain C5 / ATCC BAA-1333).